The following is a 169-amino-acid chain: Ribosome maturation factor RimP (169 aa).

This sequence belongs to the RimP family.

Its subcellular location is the cytoplasm. Functionally, required for maturation of 30S ribosomal subunits. The chain is Ribosome maturation factor RimP from Koribacter versatilis (strain Ellin345).